Here is a 990-residue protein sequence, read N- to C-terminus: Mediator of RNA polymerase II transcription subunit 5 (990 aa).

It belongs to the Mediator complex subunit 5 family. Component of the Mediator complex.

The protein localises to the nucleus. Functionally, component of the Mediator complex, a coactivator involved in the regulated transcription of nearly all RNA polymerase II-dependent genes. Mediator functions as a bridge to convey information from gene-specific regulatory proteins to the basal RNA polymerase II transcription machinery. Mediator is recruited to promoters by direct interactions with regulatory proteins and serves as a scaffold for the assembly of a functional preinitiation complex with RNA polymerase II and the general transcription factors. In Debaryomyces hansenii (strain ATCC 36239 / CBS 767 / BCRC 21394 / JCM 1990 / NBRC 0083 / IGC 2968) (Yeast), this protein is Mediator of RNA polymerase II transcription subunit 5 (NUT1).